The primary structure comprises 805 residues: Acetyl-CoA decarbonylase/synthase complex subunit alpha 3 (805 aa).

[4Fe-4S] cluster-binding residues include Cys72, Cys75, Cys76, Cys78, Cys83, and Cys93. His116 contacts CO. [Ni-4Fe-4S] cluster is bound by residues His249, Cys277, and Cys322. 4Fe-4S ferredoxin-type domains lie at Glu407–Ala435 and Glu445–Leu474. [4Fe-4S] cluster-binding residues include Cys416, Cys419, Cys422, Cys426, Cys454, Cys457, Cys460, and Cys464. Residues Cys522, Cys551, and Cys586 each coordinate [Ni-4Fe-4S] cluster.

The protein belongs to the Ni-containing carbon monoxide dehydrogenase family. As to quaternary structure, heterotetramer of two alpha and two epsilon subunits. The ACDS complex is made up of alpha, epsilon, beta, gamma and delta subunits with a probable stoichiometry of (alpha(2)epsilon(2))(4)-beta(8)-(gamma(1)delta(1))(8). It depends on [4Fe-4S] cluster as a cofactor. Requires [Ni-4Fe-4S] cluster as cofactor.

It catalyses the reaction CO + 2 oxidized [2Fe-2S]-[ferredoxin] + H2O = 2 reduced [2Fe-2S]-[ferredoxin] + CO2 + 2 H(+). It functions in the pathway one-carbon metabolism; methanogenesis from acetate. Part of the ACDS complex that catalyzes the reversible cleavage of acetyl-CoA, allowing growth on acetate as sole source of carbon and energy. The alpha-epsilon subcomponent functions as a carbon monoxide dehydrogenase. This Methanosarcina acetivorans (strain ATCC 35395 / DSM 2834 / JCM 12185 / C2A) protein is Acetyl-CoA decarbonylase/synthase complex subunit alpha 3.